The following is a 534-amino-acid chain: Fimbrial subunit type 2 (534 aa).

The N-terminal stretch at 1–32 (MKYNTSTLGRRAAAAAGVLTLAVLGLAPMAQA) is a signal peptide. 2 disordered regions span residues 56-76 (GDGN…GKGA) and 329-376 (TYAE…DKDG). Residues 334 to 347 (PPAPETPPANPDNP) show a composition bias toward pro residues. Over residues 361–376 (TIKKVDGNDRSGDKDG) the composition is skewed to basic and acidic residues. Positions 492–496 (LPLTG) match the LPXTG sorting signal motif. Threonine 495 carries the pentaglycyl murein peptidoglycan amidated threonine modification. Positions 496 to 534 (GANGMLILTASGAALLMIAVGSVLVARYRERKRNRDLAA) are cleaved as a propeptide — removed by sortase.

The protein localises to the secreted. It is found in the cell wall. It localises to the fimbrium. Functionally, major fimbrial subunit of A.naeslundii. The sequence is that of Fimbrial subunit type 2 from Actinomyces naeslundii.